We begin with the raw amino-acid sequence, 963 residues long: Iron-responsive element-binding protein 2 (963 aa).

Residues cysteine 512, cysteine 578, and cysteine 581 each coordinate [4Fe-4S] cluster.

Belongs to the aconitase/IPM isomerase family. As to quaternary structure, interacts with RBCK1 only in iron-rich conditions. Interacts (when associated with the 4Fe-4S) with FBXL5. Interacts with CIAO1 and CIAO2A. Requires [4Fe-4S] cluster as cofactor. Ubiquitinated and degraded by the proteasome in presence of high level of iron and oxygen. Ubiquitinated by a SCF complex containing FBXL5. Upon iron and oxygen depletion FBXL5 is degraded, preventing ubiquitination and allowing its RNA-binding activity. Ubiquitously expressed in rat tissues, the highest amounts present in skeletal muscle and heart.

It is found in the cytoplasm. Its function is as follows. RNA-binding protein that binds to iron-responsive elements (IRES), which are stem-loop structures found in the 5'-UTR of ferritin, and delta aminolevulinic acid synthase mRNAs, and in the 3'-UTR of transferrin receptor mRNA. Binding to the IRE element in ferritin results in the repression of its mRNA translation. Binding of the protein to the transferrin receptor mRNA inhibits the degradation of this otherwise rapidly degraded mRNA. This chain is Iron-responsive element-binding protein 2 (Ireb2), found in Rattus norvegicus (Rat).